Reading from the N-terminus, the 329-residue chain is Red chlorophyll catabolite reductase 1, chloroplastic (329 aa).

Positions 1 to 11 (MLQLRSPPPAT) are enriched in pro residues. The transit peptide at 1–50 (MLQLRSPPPATSSPSSAVSFPTLAPRLLPLRRRRRGAGSQLGGKTSSAVR) directs the protein to the chloroplast. The interval 1-61 (MLQLRSPPPA…SSAAAPGATE (61 aa)) is disordered. Composition is skewed to low complexity over residues 12-28 (SSPS…PRLL) and 46-59 (SSAV…APGA). Red chlorophyll catabolite contacts are provided by residues glutamate 163, 216 to 218 (YRS), and aspartate 299.

As to expression, expressed in leaves. Expressed at low levels in roots, stems, panicles and seeds.

It localises to the plastid. It is found in the chloroplast. It catalyses the reaction primary fluorescent chlorophyll catabolite + 2 oxidized [2Fe-2S]-[ferredoxin] = red chlorophyll catabolite + 2 reduced [2Fe-2S]-[ferredoxin] + 3 H(+). It functions in the pathway porphyrin-containing compound metabolism; chlorophyll degradation. Catalyzes the key reaction of chlorophyll catabolism, porphyrin macrocycle cleavage of pheophorbide a (pheide a) to a primary fluorescent catabolite (pFCC). Works in a two-step reaction with pheophorbide a oxygenase (PaO) by reducing the C20/C1 double bond of the intermediate, RCC. Belongs to the chlorophyll catabolic enzymes (CCEs). May play a role in senescence and response to wounding. This Oryza sativa subsp. japonica (Rice) protein is Red chlorophyll catabolite reductase 1, chloroplastic.